The chain runs to 288 residues: Cyclin-dependent kinase 2 homolog (288 aa).

The 281-residue stretch at 4–284 (YHGLEKIGEG…AKQAIEHPYF (281 aa)) folds into the Protein kinase domain. ATP-binding positions include 10–18 (IGEGTYGVV) and lysine 32. A Phosphothreonine modification is found at threonine 14. Tyrosine 15 is modified (phosphotyrosine). Aspartate 125 functions as the Proton acceptor in the catalytic mechanism. Threonine 158 carries the post-translational modification Phosphothreonine.

Belongs to the protein kinase superfamily. CMGC Ser/Thr protein kinase family. CDC2/CDKX subfamily. As to quaternary structure, may form a complex composed of at least the catalytic subunit CRK2 and a cyclin. It depends on Mg(2+) as a cofactor.

The protein resides in the cytoplasm. The catalysed reaction is L-seryl-[protein] + ATP = O-phospho-L-seryl-[protein] + ADP + H(+). The enzyme catalyses L-threonyl-[protein] + ATP = O-phospho-L-threonyl-[protein] + ADP + H(+). It catalyses the reaction [DNA-directed RNA polymerase] + ATP = phospho-[DNA-directed RNA polymerase] + ADP + H(+). Phosphorylation at Thr-14 or Tyr-15 inactivates the enzyme, while phosphorylation at Thr-158 activates it. Serine/threonine-protein kinase. Involved in the control of the cell cycle. Required for entry into S-phase and mitosis. Probable component of the kinase complex that phosphorylates the repetitive C-terminus of RNA polymerase II. This Plasmodium berghei (strain Anka) protein is Cyclin-dependent kinase 2 homolog.